Here is a 611-residue protein sequence, read N- to C-terminus: Dihydroxy-acid dehydratase (611 aa).

Residue Asp81 participates in Mg(2+) binding. A [2Fe-2S] cluster-binding site is contributed by Cys122. Residues Asp123 and Lys124 each coordinate Mg(2+). N6-carboxylysine is present on Lys124. Residue Cys195 participates in [2Fe-2S] cluster binding. Glu491 contacts Mg(2+). Ser517 functions as the Proton acceptor in the catalytic mechanism.

The protein belongs to the IlvD/Edd family. Homodimer. Requires [2Fe-2S] cluster as cofactor. Mg(2+) serves as cofactor.

The enzyme catalyses (2R)-2,3-dihydroxy-3-methylbutanoate = 3-methyl-2-oxobutanoate + H2O. The catalysed reaction is (2R,3R)-2,3-dihydroxy-3-methylpentanoate = (S)-3-methyl-2-oxopentanoate + H2O. Its pathway is amino-acid biosynthesis; L-isoleucine biosynthesis; L-isoleucine from 2-oxobutanoate: step 3/4. It participates in amino-acid biosynthesis; L-valine biosynthesis; L-valine from pyruvate: step 3/4. Functions in the biosynthesis of branched-chain amino acids. Catalyzes the dehydration of (2R,3R)-2,3-dihydroxy-3-methylpentanoate (2,3-dihydroxy-3-methylvalerate) into 2-oxo-3-methylpentanoate (2-oxo-3-methylvalerate) and of (2R)-2,3-dihydroxy-3-methylbutanoate (2,3-dihydroxyisovalerate) into 2-oxo-3-methylbutanoate (2-oxoisovalerate), the penultimate precursor to L-isoleucine and L-valine, respectively. In Brucella abortus (strain S19), this protein is Dihydroxy-acid dehydratase.